We begin with the raw amino-acid sequence, 66 residues long: DNA-directed RNA polymerase subunit omega (66 aa).

It belongs to the RNA polymerase subunit omega family. The RNAP catalytic core consists of 2 alpha, 1 beta, 1 beta' and 1 omega subunit. When a sigma factor is associated with the core the holoenzyme is formed, which can initiate transcription.

It catalyses the reaction RNA(n) + a ribonucleoside 5'-triphosphate = RNA(n+1) + diphosphate. Functionally, promotes RNA polymerase assembly. Latches the N- and C-terminal regions of the beta' subunit thereby facilitating its interaction with the beta and alpha subunits. The polypeptide is DNA-directed RNA polymerase subunit omega (Geobacillus kaustophilus (strain HTA426)).